We begin with the raw amino-acid sequence, 130 residues long: Small ribosomal subunit protein uS9 (130 aa).

It belongs to the universal ribosomal protein uS9 family.

The chain is Small ribosomal subunit protein uS9 from Cupriavidus pinatubonensis (strain JMP 134 / LMG 1197) (Cupriavidus necator (strain JMP 134)).